The chain runs to 449 residues: Trigger factor (449 aa).

The 88-residue stretch at Gly-174–Pro-261 folds into the PPIase FKBP-type domain. The interval Glu-430–Ala-449 is disordered. Residues Lys-437–Ala-449 are compositionally biased toward basic and acidic residues.

This sequence belongs to the FKBP-type PPIase family. Tig subfamily.

It localises to the cytoplasm. The enzyme catalyses [protein]-peptidylproline (omega=180) = [protein]-peptidylproline (omega=0). In terms of biological role, involved in protein export. Acts as a chaperone by maintaining the newly synthesized protein in an open conformation. Functions as a peptidyl-prolyl cis-trans isomerase. The sequence is that of Trigger factor from Synechococcus sp. (strain CC9311).